Consider the following 455-residue polypeptide: Cysteine--tRNA ligase (455 aa).

Residue cysteine 28 participates in Zn(2+) binding. The 'HIGH' region signature appears at 30-40 (MTVYDYCHLGH). The Zn(2+) site is built by cysteine 209, histidine 234, and glutamate 238. Residues 266–270 (KMSKS) carry the 'KMSKS' region motif. An ATP-binding site is contributed by lysine 269.

Belongs to the class-I aminoacyl-tRNA synthetase family. In terms of assembly, monomer. The cofactor is Zn(2+).

The protein localises to the cytoplasm. The catalysed reaction is tRNA(Cys) + L-cysteine + ATP = L-cysteinyl-tRNA(Cys) + AMP + diphosphate. This is Cysteine--tRNA ligase from Methylobacillus flagellatus (strain ATCC 51484 / DSM 6875 / VKM B-1610 / KT).